The sequence spans 145 residues: Deoxyuridine 5'-triphosphate nucleotidohydrolase (145 aa).

Residues 63–65 (RSG), Gln-76, and 80–82 (TVD) contribute to the substrate site.

It belongs to the dUTPase family. The cofactor is Mg(2+).

The catalysed reaction is dUTP + H2O = dUMP + diphosphate + H(+). Its pathway is pyrimidine metabolism; dUMP biosynthesis; dUMP from dCTP (dUTP route): step 2/2. In terms of biological role, this enzyme is involved in nucleotide metabolism: it produces dUMP, the immediate precursor of thymidine nucleotides and it decreases the intracellular concentration of dUTP so that uracil cannot be incorporated into DNA. The sequence is that of Deoxyuridine 5'-triphosphate nucleotidohydrolase from Chlamydia muridarum (strain MoPn / Nigg).